The primary structure comprises 768 residues: Actin filament-associated protein 1-like 1 (768 aa).

Residues D82–H145 are disordered. Phosphoserine is present on residues S94, S98, S104, and S153. The interval G173–E211 is disordered. Over residues S177–E190 the composition is skewed to low complexity. Residues E220–K316 enclose the PH 1 domain. S329 and S343 each carry phosphoserine. A PH 2 domain is found at E418 to G512. Y557 carries the post-translational modification Phosphotyrosine. The tract at residues Q566–S604 is disordered. Basic and acidic residues predominate over residues E587–V596. Residues G611–S700 adopt a coiled-coil conformation. Residues P705–T768 are disordered. Residues S710–P729 are compositionally biased toward polar residues. At S747 the chain carries Phosphoserine. Residues K759 to T768 are compositionally biased toward basic and acidic residues.

In terms of assembly, interacts with CTTN. As to expression, expressed in breast, colon and brain. In all 3 tissues, expressed in the microvasculature (at protein level). In addition, in the breast, found in the contractile myoepithelial cell layer which surrounds the breast ducts (at protein level). In the colon, expressed in the mucous membrane and colonic crypts and in the smooth muscle cell layer which provide movement of the colon (at protein level). In the cerebellum, localized around the Purkinje neurons and the granule cells of the granular layer, but not inside cell bodies (at protein level). Outside of the cerebellar cortex, expressed in glial cells (at protein level). Highly expressed away from the cell bodies within the dentate nucleus (at protein level).

It is found in the cytoplasm. It localises to the cell projection. Its subcellular location is the podosome. The protein localises to the invadopodium. The protein resides in the cytoskeleton. It is found in the stress fiber. Its function is as follows. May be involved in podosome and invadosome formation. The protein is Actin filament-associated protein 1-like 1 (AFAP1L1) of Homo sapiens (Human).